Consider the following 202-residue polypeptide: Thymidylate kinase (202 aa).

7–14 (GIDGSGKT) contacts ATP.

Belongs to the thymidylate kinase family.

The catalysed reaction is dTMP + ATP = dTDP + ADP. Functionally, phosphorylation of dTMP to form dTDP in both de novo and salvage pathways of dTTP synthesis. The polypeptide is Thymidylate kinase (Ehrlichia ruminantium (strain Gardel)).